The sequence spans 525 residues: GMP synthase [glutamine-hydrolyzing] (525 aa).

Positions 8 to 207 (KILILDFGSQ…ALDICECEAN (200 aa)) constitute a Glutamine amidotransferase type-1 domain. The Nucleophile role is filled by C85. Active-site residues include H181 and E183. The GMPS ATP-PPase domain maps to 208 to 400 (WKPTSIIEDA…LGLPYDMLYR (193 aa)). Residue 235–241 (SGGVDSS) coordinates ATP.

In terms of assembly, homodimer.

The catalysed reaction is XMP + L-glutamine + ATP + H2O = GMP + L-glutamate + AMP + diphosphate + 2 H(+). Its pathway is purine metabolism; GMP biosynthesis; GMP from XMP (L-Gln route): step 1/1. Functionally, catalyzes the synthesis of GMP from XMP. The sequence is that of GMP synthase [glutamine-hydrolyzing] from Shewanella sediminis (strain HAW-EB3).